The sequence spans 360 residues: DNA replication and repair protein RecF (360 aa).

Residue 30–37 (GHNGSGKT) participates in ATP binding.

Belongs to the RecF family.

It is found in the cytoplasm. Functionally, the RecF protein is involved in DNA metabolism; it is required for DNA replication and normal SOS inducibility. RecF binds preferentially to single-stranded, linear DNA. It also seems to bind ATP. In Shewanella pealeana (strain ATCC 700345 / ANG-SQ1), this protein is DNA replication and repair protein RecF.